A 266-amino-acid chain; its full sequence is 3-methyl-2-oxobutanoate hydroxymethyltransferase (266 aa).

Residues D45 and D84 each coordinate Mg(2+). Residues D45 to S46, D84, and K112 contribute to the 3-methyl-2-oxobutanoate site. Residue E114 coordinates Mg(2+). E181 (proton acceptor) is an active-site residue.

This sequence belongs to the PanB family. In terms of assembly, homodecamer; pentamer of dimers. Mg(2+) serves as cofactor.

It localises to the cytoplasm. It catalyses the reaction 3-methyl-2-oxobutanoate + (6R)-5,10-methylene-5,6,7,8-tetrahydrofolate + H2O = 2-dehydropantoate + (6S)-5,6,7,8-tetrahydrofolate. It functions in the pathway cofactor biosynthesis; (R)-pantothenate biosynthesis; (R)-pantoate from 3-methyl-2-oxobutanoate: step 1/2. In terms of biological role, catalyzes the reversible reaction in which hydroxymethyl group from 5,10-methylenetetrahydrofolate is transferred onto alpha-ketoisovalerate to form ketopantoate. This Pseudomonas fluorescens (strain SBW25) protein is 3-methyl-2-oxobutanoate hydroxymethyltransferase.